Here is a 1976-residue protein sequence, read N- to C-terminus: Myosin-10 (1976 aa).

Arginine 18 bears the Omega-N-methylarginine mark. The Myosin N-terminal SH3-like domain occupies 31 to 81 (TAKKLVWIPSERHGFEAASIKEERGDEVMVELAENGKKAMVNKDDIQKMNP). Residues 85–783 (SKVEDMAELT…VLAHLEEERD (699 aa)) enclose the Myosin motor domain. 178–185 (GESGAGKT) contributes to the ATP binding site. Leucine 214 is subject to Phosphoserine. An N6-acetyllysine modification is found at lysine 442. The interval 661–683 (LTKLMATLRNTNPNFVRCIIPNH) is actin-binding. Positions 786-815 (ITDIIIFFQAVCRGYLARKAFAKKQQQLSA) constitute an IQ domain. The stretch at 845–1976 (LQVTRQEEEL…VNETQPPQSE (1132 aa)) forms a coiled coil. A disordered region spans residues 1127–1147 (FESEKASRNKAEKQKRDLSEE). A compositionally biased stretch (basic and acidic residues) spans 1129–1147 (SEKASRNKAEKQKRDLSEE). Phosphoserine is present on serine 1145. 3 positions are modified to N6-acetyllysine: lysine 1241, lysine 1301, and lysine 1645. Disordered stretches follow at residues 1697–1728 (ASSE…SALL) and 1872–1976 (MEKA…PQSE). Over residues 1698-1708 (SSERARRHAEQ) the composition is skewed to basic and acidic residues. At arginine 1930 the chain carries Omega-N-methylarginine. Phosphoserine occurs at positions 1935, 1937, 1938, and 1939. Position 1940 is an omega-N-methylarginine (arginine 1940). 2 positions are modified to phosphoserine: serine 1952 and serine 1956. Residue threonine 1960 is modified to Phosphothreonine. Residues 1967-1976 (VNETQPPQSE) show a composition bias toward polar residues. Position 1975 is a phosphoserine (serine 1975).

This sequence belongs to the TRAFAC class myosin-kinesin ATPase superfamily. Myosin family. Myosin is a hexameric protein that consists of 2 heavy chain subunits (MHC), 2 alkali light chain subunits (MLC) and 2 regulatory light chain subunits (MLC-2). Interacts with PLEKHG6. Interacts with ECPAS. Interacts with KIF26B. Interacts with LARP6. Interacts with MCC. Interacts with CFAP95. As to quaternary structure, (Microbial infection) Interacts with herpes simplex virus 1/HHV-1 envelope glycoprotein B. Phosphorylated by ABL2. Isoform 1 is expressed in cerebellum and spinal chord. Isoform 2 is expressed in cerebrum and retina. Isoform 3 is expressed in the cerebrum and to a much lower extent in cerebellum.

The protein resides in the cell projection. It is found in the lamellipodium. The protein localises to the cell membrane. Functionally, cellular myosin that appears to play a role in cytokinesis, cell shape, and specialized functions such as secretion and capping. Involved with LARP6 in the stabilization of type I collagen mRNAs for CO1A1 and CO1A2. During cell spreading, plays an important role in cytoskeleton reorganization, focal contacts formation (in the central part but not the margins of spreading cells), and lamellipodial extension; this function is mechanically antagonized by MYH9. In terms of biological role, (Microbial infection) Acts as a receptor for herpes simplex virus 1/HHV-1 envelope glycoprotein B. In Homo sapiens (Human), this protein is Myosin-10 (MYH10).